The primary structure comprises 898 residues: Putative aconitate hydratase, cytoplasmic (898 aa).

Residues glutamine 90 and 209–211 (DSH) each bind substrate. Residues cysteine 441, cysteine 507, and cysteine 510 each contribute to the [4Fe-4S] cluster site. Substrate is bound by residues arginine 540, arginine 545, arginine 703, and 784-785 (SR).

This sequence belongs to the aconitase/IPM isomerase family. It depends on [4Fe-4S] cluster as a cofactor.

It is found in the cytoplasm. It carries out the reaction citrate = D-threo-isocitrate. Its pathway is carbohydrate metabolism; glyoxylate and dicarboxylate metabolism. Catalyzes the isomerization of citrate to isocitrate via cis-aconitate. The polypeptide is Putative aconitate hydratase, cytoplasmic (Oryza sativa subsp. japonica (Rice)).